Reading from the N-terminus, the 527-residue chain is Peptide chain release factor 3 (527 aa).

The region spanning 9–278 is the tr-type G domain; the sequence is NKRRTFAIIS…GLTQWAPKPQ (270 aa). Residues 18 to 25, 86 to 90, and 140 to 143 each bind GTP; these read SHPDAGKT, DTPGH, and NKLD.

Belongs to the TRAFAC class translation factor GTPase superfamily. Classic translation factor GTPase family. PrfC subfamily.

It is found in the cytoplasm. Increases the formation of ribosomal termination complexes and stimulates activities of RF-1 and RF-2. It binds guanine nucleotides and has strong preference for UGA stop codons. It may interact directly with the ribosome. The stimulation of RF-1 and RF-2 is significantly reduced by GTP and GDP, but not by GMP. In Haemophilus influenzae (strain ATCC 51907 / DSM 11121 / KW20 / Rd), this protein is Peptide chain release factor 3 (prfC).